The following is a 382-amino-acid chain: Dihydroflavonol 4-reductase (382 aa).

NADP(+) contacts are provided by lysine 44 and tyrosine 163.

It belongs to the NAD(P)-dependent epimerase/dehydratase family. Dihydroflavonol-4-reductase subfamily.

The catalysed reaction is a (2R,3S,4S)-leucoanthocyanidin + NADP(+) = a (2R,3R)-dihydroflavonol + NADPH + H(+). The enzyme catalyses (2S)-flavan-4-ol + NADP(+) = (2S)-flavanone + NADPH + H(+). Its pathway is pigment biosynthesis; anthocyanin biosynthesis. Its function is as follows. Bifunctional enzyme involved in flavonoid metabolism. The protein is Dihydroflavonol 4-reductase (DFRA) of Arabidopsis thaliana (Mouse-ear cress).